Here is a 259-residue protein sequence, read N- to C-terminus: Deoxyribose-phosphate aldolase (259 aa).

The active-site Proton donor/acceptor is Asp102. The Schiff-base intermediate with acetaldehyde role is filled by Lys167. Lys201 functions as the Proton donor/acceptor in the catalytic mechanism.

This sequence belongs to the DeoC/FbaB aldolase family. DeoC type 2 subfamily.

The protein localises to the cytoplasm. It catalyses the reaction 2-deoxy-D-ribose 5-phosphate = D-glyceraldehyde 3-phosphate + acetaldehyde. It functions in the pathway carbohydrate degradation; 2-deoxy-D-ribose 1-phosphate degradation; D-glyceraldehyde 3-phosphate and acetaldehyde from 2-deoxy-alpha-D-ribose 1-phosphate: step 2/2. Its function is as follows. Catalyzes a reversible aldol reaction between acetaldehyde and D-glyceraldehyde 3-phosphate to generate 2-deoxy-D-ribose 5-phosphate. This chain is Deoxyribose-phosphate aldolase, found in Photorhabdus laumondii subsp. laumondii (strain DSM 15139 / CIP 105565 / TT01) (Photorhabdus luminescens subsp. laumondii).